The chain runs to 357 residues: Fulicin peptides (357 aa).

A signal peptide spans 1 to 17 (MQPTVLLILMTSCLTYQ). The propeptide occupies 18–119 (VIADKPKGNH…VDGSQGHLEP (102 aa)). The residue at position 123 (Asn123) is a D-asparagine. Val126 carries the post-translational modification Valine amide. The propeptide occupies 130 to 194 (NTLPEEAGSF…YNTMNEDEAS (65 aa)). Val201 and Val209 each carry valine amide. A leucine amide mark is found at Leu217 and Leu226. Residues Ile233 and Ile242 each carry the isoleucine amide modification. 2 positions are modified to valine amide: Val250 and Val259. A propeptide spanning residues 263–298 (NQGVFTVSPSSTKISFDDNYLPYLSSVDAGDLSDVN) is cleaved from the precursor. A Leucine amide modification is found at Leu305. Positions 311-357 (TAEQDETSQRSNERLVALLQNTGFRKRLSRMLQNQRLVEHYPEFIGK) are excised as a propeptide.

In terms of tissue distribution, found in central ganglia and the ventricles and atria of the heart.

Functionally, potentiates tetanic contraction of the penis retractor muscle at very low concentrations, and also shows modulatory actions on the activity of the buccal and ventricular muscles and the central ganglionic neurons. The chain is Fulicin peptides from Lissachatina fulica (Giant African land snail).